A 552-amino-acid polypeptide reads, in one-letter code: Ribosomal lysine N-methyltransferase 3 (552 aa).

The SET domain maps to 26–335 (SKCDIRESPL…QGQEIFNSYG (310 aa)). S-adenosyl-L-methionine is bound at residue tyrosine 334. Residues 399-432 (EDEEDEDGQAKSDNLSDDIESEEEEEEEEGDDSL) form a disordered region. A compositionally biased stretch (acidic residues) spans 413–432 (LSDDIESEEEEEEEEGDDSL).

It belongs to the class V-like SAM-binding methyltransferase superfamily.

The protein resides in the nucleus. Its function is as follows. S-adenosyl-L-methionine-dependent protein-lysine N-methyltransferase that monomethylates 60S ribosomal protein L42 (RPL42A and RPL42B) at 'Lys-40'. This Saccharomyces cerevisiae (strain ATCC 204508 / S288c) (Baker's yeast) protein is Ribosomal lysine N-methyltransferase 3.